Consider the following 217-residue polypeptide: 3-demethoxyubiquinol 3-hydroxylase (217 aa).

The Fe cation site is built by glutamate 66, glutamate 96, histidine 99, glutamate 148, glutamate 180, and histidine 183.

The protein belongs to the COQ7 family. It depends on Fe cation as a cofactor.

Its subcellular location is the cell membrane. It carries out the reaction a 5-methoxy-2-methyl-3-(all-trans-polyprenyl)benzene-1,4-diol + AH2 + O2 = a 3-demethylubiquinol + A + H2O. It participates in cofactor biosynthesis; ubiquinone biosynthesis. Functionally, catalyzes the hydroxylation of 2-nonaprenyl-3-methyl-6-methoxy-1,4-benzoquinol during ubiquinone biosynthesis. The sequence is that of 3-demethoxyubiquinol 3-hydroxylase from Xanthomonas axonopodis pv. citri (strain 306).